The sequence spans 297 residues: Leucine-rich repeat-containing protein 25 (297 aa).

The first 25 residues, 1–25 (MGSIRTRLLWLCLLMLLALLHKSGS), serve as a signal peptide directing secretion. The Extracellular segment spans residues 26–169 (QDLTCMVHPS…SCPPSWGPGT (144 aa)). Asn-44 and Asn-49 each carry an N-linked (GlcNAc...) asparagine glycan. LRR repeat units lie at residues 66 to 89 (HAQVLDLSKNGLQVLPGAFFDKLE) and 90 to 113 (KLQTLIVTHNQLDSVDRSLALRCD). Asn-133 and Asn-152 each carry an N-linked (GlcNAc...) asparagine glycan. The chain crosses the membrane as a helical span at residues 170–190 (IGALVAGTISLAVAVSGSVLA). At 191-297 (WRLLRRRRRA…VYCNLESLGR (107 aa)) the chain is on the cytoplasmic side. The interval 202–244 (EHSLSKAQMSPHDIPKPVTDFLPRYSSRRPGPKAPDSPPSRFT) is disordered. Phosphoserine is present on residues Ser-211, Ser-238, and Ser-267. At Tyr-289 the chain carries Phosphotyrosine.

Interacts with RIGI. Interacts with SQSTM1. Interacts with p65/RELA; this interaction promotes the degradation of RELA through autophagy.

It localises to the membrane. It is found in the cytoplasm. Functionally, plays a role in the inhibition of RLR-mediated type I interferon signaling pathway by targeting RIGI for autophagic degradation. Interacts specifically with ISG15-associated RIGI to promote interaction between RIGI and the autophagic cargo receptor p62/SQSTM1 to mediate RIGI degradation via selective autophagy. Plays also a role in the inhibition of NF-kappa-B signaling pathway and inflammatory response by promoting the degradation of p65/RELA. In Mus musculus (Mouse), this protein is Leucine-rich repeat-containing protein 25 (Lrrc25).